A 926-amino-acid chain; its full sequence is Ubiquitin carboxyl-terminal hydrolase 4 (926 aa).

A Rhodanese domain is found at 205–328; the sequence is SQMEILLIDI…WLKSNYGRQV (124 aa). The residue at position 443 (serine 443) is a Phosphoserine. In terms of domain architecture, USP spans 562–923; the sequence is VGLENLGNSC…NAYVLFYHRV (362 aa). The active-site Nucleophile is cysteine 571. Histidine 880 serves as the catalytic Proton acceptor.

This sequence belongs to the peptidase C19 family. Interacts with BRO1, RFU1 and VPS32. Associates with the 26S proteasome.

It is found in the cytoplasm. Its subcellular location is the late endosome membrane. It carries out the reaction Thiol-dependent hydrolysis of ester, thioester, amide, peptide and isopeptide bonds formed by the C-terminal Gly of ubiquitin (a 76-residue protein attached to proteins as an intracellular targeting signal).. With respect to regulation, RFU1 is an inhibitor of deubiquitination activity. In terms of biological role, ubiquitin thioesterase that acts at the late endosome/prevacuolar compartment to recover ubiquitin from ubiquitinated membrane proteins en route to the vacuole. Also removes ubiquitin from soluble proteins targeted to proteasomes. Is essential to maintain a normal level of free ubiquitin. Involved in the ammonium-induced down-regulation of the GAP1 permease and the UME3 destruction in response to oxidative stress. Has a role in the RAD9 checkpoint response to TOP1 poisons. Required for promoting coordination of DNA replication and avoids DNA overreplication. The chain is Ubiquitin carboxyl-terminal hydrolase 4 (DOA4) from Saccharomyces cerevisiae (strain ATCC 204508 / S288c) (Baker's yeast).